Reading from the N-terminus, the 519-residue chain is Glutamate--cysteine ligase (519 aa).

This sequence belongs to the glutamate--cysteine ligase type 1 family. Type 1 subfamily.

It carries out the reaction L-cysteine + L-glutamate + ATP = gamma-L-glutamyl-L-cysteine + ADP + phosphate + H(+). It participates in sulfur metabolism; glutathione biosynthesis; glutathione from L-cysteine and L-glutamate: step 1/2. This is Glutamate--cysteine ligase from Edwardsiella ictaluri (strain 93-146).